We begin with the raw amino-acid sequence, 381 residues long: MSQNTDSPVLSLAKDLISRQSVTPLDEGCQQLMADRLADAGFNIESMVFEDTTNMWARRGTQSPVFCFAGHTDVVPVGDLNRWHTPPFEPVVIDDYLHGRGAADMKGSLAAMLVATERFIKKFPDHQGSIAFLITSDEEGPFINGTTRVIDTLEARNEKITWSLVGEPSSTHKLGDIVKNGRRGSLTGNLTVKGVQGHVAYPHLADNPIHKAAPALDELARMKWDNGNEFFPPTSFQIANINGGTGASNVIPGALEVMFNFRYSTEVTAEILIERVLNILDAHGLEYDIDWVFNGLPFLTGDGPLLEATKAAIKKVTGTNTDPQTSGGTSDGRFIAPTGAQVIELGPVNATIHKVNECVKVSDLELLTDCYEAILENLLCK.

Residue H71 participates in Zn(2+) binding. D73 is an active-site residue. D104 is a Zn(2+) binding site. The Proton acceptor role is filled by E138. The Zn(2+) site is built by E139, E167, and H353.

The protein belongs to the peptidase M20A family. DapE subfamily. As to quaternary structure, homodimer. The cofactor is Zn(2+). Requires Co(2+) as cofactor.

The catalysed reaction is N-succinyl-(2S,6S)-2,6-diaminopimelate + H2O = (2S,6S)-2,6-diaminopimelate + succinate. The protein operates within amino-acid biosynthesis; L-lysine biosynthesis via DAP pathway; LL-2,6-diaminopimelate from (S)-tetrahydrodipicolinate (succinylase route): step 3/3. Catalyzes the hydrolysis of N-succinyl-L,L-diaminopimelic acid (SDAP), forming succinate and LL-2,6-diaminopimelate (DAP), an intermediate involved in the bacterial biosynthesis of lysine and meso-diaminopimelic acid, an essential component of bacterial cell walls. The protein is Succinyl-diaminopimelate desuccinylase of Shewanella halifaxensis (strain HAW-EB4).